We begin with the raw amino-acid sequence, 396 residues long: Elongation factor Tu 1 (396 aa).

In terms of domain architecture, tr-type G spans 10-206 (KPHVNIGTIG…AVDEYIPTPE (197 aa)). The interval 19–26 (GHVDHGKT) is G1. 19-26 (GHVDHGKT) contacts GTP. Residue Thr26 coordinates Mg(2+). Positions 60 to 64 (GITIN) are G2. The segment at 81–84 (DCPG) is G3. GTP is bound by residues 81 to 85 (DCPGH) and 136 to 139 (NKVD). Residues 136–139 (NKVD) form a G4 region. Residues 174–176 (SAL) form a G5 region.

It belongs to the TRAFAC class translation factor GTPase superfamily. Classic translation factor GTPase family. EF-Tu/EF-1A subfamily. In terms of assembly, monomer.

The protein resides in the cytoplasm. The catalysed reaction is GTP + H2O = GDP + phosphate + H(+). Functionally, GTP hydrolase that promotes the GTP-dependent binding of aminoacyl-tRNA to the A-site of ribosomes during protein biosynthesis. In Hyphomonas neptunium (strain ATCC 15444), this protein is Elongation factor Tu 1.